A 371-amino-acid polypeptide reads, in one-letter code: Putative glutamate--cysteine ligase 2 (371 aa).

Belongs to the glutamate--cysteine ligase type 2 family. YbdK subfamily.

It carries out the reaction L-cysteine + L-glutamate + ATP = gamma-L-glutamyl-L-cysteine + ADP + phosphate + H(+). Its function is as follows. ATP-dependent carboxylate-amine ligase which exhibits weak glutamate--cysteine ligase activity. The chain is Putative glutamate--cysteine ligase 2 from Paraburkholderia phytofirmans (strain DSM 17436 / LMG 22146 / PsJN) (Burkholderia phytofirmans).